The sequence spans 518 residues: Calcium-dependent protein kinase 1 (518 aa).

The span at 1 to 10 (MGNRTSRHHR) shows a compositional bias: basic residues. The disordered stretch occupies residues 1–49 (MGNRTSRHHRAAPEQPPPQPKPKPQPQQQQQQWPRPQQPTPPPAAAPDA). Gly2 is lipidated: N-myristoyl glycine. Residues 14–25 (EQPPPQPKPKPQ) are compositionally biased toward pro residues. Over residues 26-35 (PQQQQQQWPR) the composition is skewed to low complexity. Residues 36-45 (PQQPTPPPAA) are compositionally biased toward pro residues. A Protein kinase domain is found at 66 to 324 (YTFGRELGRG…SAEILNHPWI (259 aa)). Residues 72–80 (LGRGQFGVT) and Lys95 each bind ATP. Asp190 serves as the catalytic Proton acceptor. Residues 330–360 (APDKPLDITVISRMKQFRAMNKLKKVALKVV) form an autoinhibitory domain region. EF-hand domains are found at residues 367-402 (EEIT…LGTK), 403-438 (ISES…MNRL), 439-474 (EKED…YDMG), and 475-509 (DDKT…NNPE). Ca(2+) contacts are provided by Asp380, Asp382, Ser384, Thr386, Glu391, Asp416, Asp418, Asn420, Thr422, Glu427, Asp452, Asp454, Ser456, Tyr458, Glu463, Asp487, Asp489, Asp491, Arg493, and Glu498.

Belongs to the protein kinase superfamily. Ser/Thr protein kinase family. CDPK subfamily. As to expression, expressed in roots and leaf blades.

It is found in the membrane. The catalysed reaction is L-seryl-[protein] + ATP = O-phospho-L-seryl-[protein] + ADP + H(+). It carries out the reaction L-threonyl-[protein] + ATP = O-phospho-L-threonyl-[protein] + ADP + H(+). Activated by calcium. Autophosphorylation may play an important role in the regulation of the kinase activity. Its function is as follows. May play a role in signal transduction pathways that involve calcium as a second messenger. This Oryza sativa subsp. japonica (Rice) protein is Calcium-dependent protein kinase 1.